The chain runs to 398 residues: Alpha-2,8-sialyltransferase 8F (398 aa).

The Cytoplasmic portion of the chain corresponds to 1-3; the sequence is MRS. Residues 4-24 traverse the membrane as a helical; Signal-anchor for type II membrane protein segment; that stretch reads GGTLFALIGSLMLLLLLRMLW. Topologically, residues 25-398 are lumenal; it reads CPADAPARSR…KLQFSKCETA (374 aa). N-linked (GlcNAc...) asparagine glycosylation is found at asparagine 66, asparagine 93, asparagine 151, and asparagine 196. Intrachain disulfides connect cysteine 186–cysteine 335 and cysteine 200–cysteine 395. Substrate contacts are provided by residues asparagine 214, 236–238, and 322–324; these read NPS and STG. Histidine 370 functions as the Proton donor/acceptor in the catalytic mechanism.

Belongs to the glycosyltransferase 29 family. Highly expressed in kidney and expressed and all tissues tested.

It is found in the golgi apparatus membrane. The catalysed reaction is a ganglioside GM3 + CMP-N-acetyl-beta-neuraminate = a ganglioside GD3 + CMP + H(+). It catalyses the reaction a ganglioside GM3 (d18:1(4E)) + CMP-N-acetyl-beta-neuraminate = a ganglioside GD3 (d18:1(4E)) + CMP + H(+). It carries out the reaction a ganglioside GD1a (d18:1(4E)) + CMP-N-acetyl-beta-neuraminate = a ganglioside GT1a (d18:1(4E)) + CMP + H(+). The enzyme catalyses a ganglioside GD1a + CMP-N-acetyl-beta-neuraminate = a ganglioside GT1a + CMP + H(+). The catalysed reaction is a ganglioside GM1b (d18:1(4E)) + CMP-N-acetyl-beta-neuraminate = a ganglioside GD1c (d18:1(4E)) + CMP + H(+). It catalyses the reaction a ganglioside GM1b + CMP-N-acetyl-beta-neuraminate = a ganglioside GD1c + CMP + H(+). It carries out the reaction a ganglioside GM4 (d18:1(4E)) + CMP-N-acetyl-beta-neuraminate = an N-acetyl-alpha-neuraminosyl-(2-&gt;8)-N-acetyl-alpha-neuraminosyl-(2-&gt;3)-beta-D-galactosyl-(1&lt;-&gt;1')-N-acylsphing-4-enine + CMP + H(+). The enzyme catalyses N-acetyl-alpha-neuraminosyl-(2-&gt;3)-beta-D-galactosyl-(1&lt;-&gt;1')-ceramide + CMP-N-acetyl-beta-neuraminate = N-acetyl-alpha-neuraminosyl-(2-&gt;8)-N-acetyl-alpha-neuraminosyl-(2-&gt;3)-beta-D-galactosyl-(1&lt;-&gt;1')-ceramide + CMP + H(+). The catalysed reaction is a ganglioside GT1b (d18:1(4E)) + CMP-N-acetyl-beta-neuraminate = a ganglioside GQ1b (d18:1(4E)) + CMP + H(+). It catalyses the reaction a ganglioside GT1b + CMP-N-acetyl-beta-neuraminate = a ganglioside GQ1b + CMP + H(+). Its pathway is protein modification; protein glycosylation. Its function is as follows. Alpha-2,8-sialyltransferase that prefers O-glycans to N-glycans or glycolipids as acceptor substrates. The minimal acceptor substrate is the NeuAc-alpha-2,3(6)-Gal sequence at the non-reducing end of their carbohydrate groups. This chain is Alpha-2,8-sialyltransferase 8F, found in Mus musculus (Mouse).